Here is an 859-residue protein sequence, read N- to C-terminus: Anoctamin-7 (859 aa).

The Cytoplasmic portion of the chain corresponds to 1–297; it reads MLRGQAREED…YFAWLGFYTG (297 aa). The segment at 25-50 is disordered; the sequence is GCSYGSTAQASEAGKQQVAPSRVGSS. Residues 298-318 form a helical membrane-spanning segment; sequence WLLPAAVVGTVVFLVGCFLVF. At 319–362 the chain is on the extracellular side; that stretch reads SDIPTQELCHSSDSFDMCPLCSDCSFWLLSSACTLAQAGRLFDH. A helical membrane pass occupies residues 363–383; sequence GGTVFFSLFMALWAVLLLEYW. Over 384-441 the chain is Cytoplasmic; that stretch reads KRKNATLAYRWDCSDYEDIEERPRPQFAATAPMTALNPITGEDEPYFPEKNRVRRMLA. Residues 442 to 462 form a helical membrane-spanning segment; it reads GSVVLLMMVAVVIMCLVSVIL. At 463-492 the chain is on the extracellular side; sequence YRAVMAIIVSRSDNAFLSAWASRIASLTGS. The chain crosses the membrane as a helical span at residues 493 to 513; that stretch reads VVNLVFILILSKVYVLLAQVL. The Cytoplasmic portion of the chain corresponds to 514 to 530; it reads TRWEMHRTQTEFEDAFT. A helical membrane pass occupies residues 531-551; the sequence is LKVFIFQFVNFYASPVYIAFF. Topologically, residues 552-651 are extracellular; that stretch reads KGRFVGYPGN…FHEYLEMVLQ (100 aa). A helical transmembrane segment spans residues 652-672; that stretch reads FGFVTIFVAACPLAPLFALLN. Over 673-700 the chain is Cytoplasmic; it reads NWVEIRLDARKFVCEYRRPVAERAQDIG. The chain crosses the membrane as a helical span at residues 701–721; it reads IWFHILTGLTHLAVISNAFLL. Over 722–780 the chain is Extracellular; that stretch reads AFSSDFLPRVYYSWTHAPDLHGFLNFTLARAPPTFTSAHNRTCRYRAFRDDDGHYSPTY. N-linked (GlcNAc...) asparagine glycosylation is found at Asn746 and Asn761. A helical transmembrane segment spans residues 781 to 801; it reads WTLLAIRLAFVIVFEHVVFSI. Residues 802–859 are Cytoplasmic-facing; sequence GRVLDLLVPDIPESVEIKVKREYYLAKQALAENEALLGATGVKDDQPPSSEPSLGLPA.

Belongs to the anoctamin family. In terms of tissue distribution, highly expressed in the stomach. Expressed at low levels in small intestine and large intestine.

Its subcellular location is the cell membrane. It localises to the endoplasmic reticulum. It catalyses the reaction a 1,2-diacyl-sn-glycero-3-phospho-L-serine(in) = a 1,2-diacyl-sn-glycero-3-phospho-L-serine(out). The enzyme catalyses a beta-D-galactosyl-(1&lt;-&gt;1')-N-acylsphing-4-enine(out) = a beta-D-galactosyl-(1&lt;-&gt;1')-N-acylsphing-4-enine(in). It carries out the reaction a 1,2-diacyl-sn-glycero-3-phosphocholine(in) = a 1,2-diacyl-sn-glycero-3-phosphocholine(out). Functionally, has calcium-dependent phospholipid scramblase activity; scrambles phosphatidylserine, phosphatidylcholine and galactosylceramide. Does not exhibit calcium-activated chloride channel (CaCC) activity. May play a role in cell-cell interactions. This Mus musculus (Mouse) protein is Anoctamin-7 (Ano7).